Reading from the N-terminus, the 412-residue chain is Acetylornithine aminotransferase (412 aa).

Residues 109 to 110 (GA) and phenylalanine 142 contribute to the pyridoxal 5'-phosphate site. A N(2)-acetyl-L-ornithine-binding site is contributed by arginine 145. Residue 233–236 (DEVQ) coordinates pyridoxal 5'-phosphate. Lysine 262 is subject to N6-(pyridoxal phosphate)lysine. Serine 289 contributes to the N(2)-acetyl-L-ornithine binding site. Threonine 290 contacts pyridoxal 5'-phosphate.

Belongs to the class-III pyridoxal-phosphate-dependent aminotransferase family. ArgD subfamily. Homodimer. It depends on pyridoxal 5'-phosphate as a cofactor.

It localises to the cytoplasm. It catalyses the reaction N(2)-acetyl-L-ornithine + 2-oxoglutarate = N-acetyl-L-glutamate 5-semialdehyde + L-glutamate. It functions in the pathway amino-acid biosynthesis; L-arginine biosynthesis; N(2)-acetyl-L-ornithine from L-glutamate: step 4/4. The sequence is that of Acetylornithine aminotransferase from Thermosynechococcus vestitus (strain NIES-2133 / IAM M-273 / BP-1).